We begin with the raw amino-acid sequence, 92 residues long: Kinetoplastid membrane protein 11B (92 aa).

Belongs to the KMP-11 family. Monomer.

It localises to the cytoplasm. Its subcellular location is the cytoskeleton. The protein localises to the cell projection. The protein resides in the cilium. It is found in the flagellum. Functionally, may be involved in the regulation of the cytoskeleton through interaction with the subpellicular microtubules. May be involved in parasite mobility and attachment to the surface of the host cell. Behaves as a strong immunogen during infection. In Leishmania infantum, this protein is Kinetoplastid membrane protein 11B (KMP-11B).